The chain runs to 65 residues: Large ribosomal subunit protein bL35 (65 aa).

This sequence belongs to the bacterial ribosomal protein bL35 family.

The chain is Large ribosomal subunit protein bL35 from Chromobacterium violaceum (strain ATCC 12472 / DSM 30191 / JCM 1249 / CCUG 213 / NBRC 12614 / NCIMB 9131 / NCTC 9757 / MK).